We begin with the raw amino-acid sequence, 329 residues long: MNAAITATAKYLPDGILSNLDLERMLDTNDEWIRTRTGISERRILRDPEKATSYICGEVARQLLEKRGMKAEELDLIIVATMTPDMLFPSTACLVQDIIGAGNAWAFDLNAACSGFLFALNTGSRFIESGAHKKVMVIGADKMSSVIDYTDRSTAILFGDGGGGVILEPATTEGCGVLDNRMYCDGTSGKDHLLMKGGGSLHPATHQTVDDHLHYIYQDGRMVFKSAVTSMANVAVEIMERNGLTAENVSWLVPHQANQRIISATAERMGISSDKFISNVARYGNTTAGTIPICLAELDEENKLHPGSNLVLCSFGAGYTWGGVYVKWQ.

Active-site residues include cysteine 113 and histidine 255. An ACP-binding region spans residues 256 to 260 (QANQR). Asparagine 285 is an active-site residue.

Belongs to the thiolase-like superfamily. FabH family. As to quaternary structure, homodimer.

Its subcellular location is the cytoplasm. It catalyses the reaction malonyl-[ACP] + acetyl-CoA + H(+) = 3-oxobutanoyl-[ACP] + CO2 + CoA. It participates in lipid metabolism; fatty acid biosynthesis. In terms of biological role, catalyzes the condensation reaction of fatty acid synthesis by the addition to an acyl acceptor of two carbons from malonyl-ACP. Catalyzes the first condensation reaction which initiates fatty acid synthesis and may therefore play a role in governing the total rate of fatty acid production. Possesses both acetoacetyl-ACP synthase and acetyl transacylase activities. Its substrate specificity determines the biosynthesis of branched-chain and/or straight-chain of fatty acids. This Chlorobium phaeovibrioides (strain DSM 265 / 1930) (Prosthecochloris vibrioformis (strain DSM 265)) protein is Beta-ketoacyl-[acyl-carrier-protein] synthase III.